A 477-amino-acid chain; its full sequence is Endo-1,4-beta-xylanase A (477 aa).

Residues 1–41 (MGSYALPRSGVRRSIRVLLLALVVGVLGTATALIAPPGAHA) form the signal peptide. Residues 42 to 340 (AESTLGAAAA…KAAYTAVLDA (299 aa)) form the GH10 domain. The Proton donor role is filled by glutamate 169. Glutamate 277 functions as the Nucleophile in the catalytic mechanism. The region spanning 361–477 (SGRCLDVPDA…NGSNQRWTRT (117 aa)) is the Ricin B-type lectin domain. Disulfide bonds link cysteine 364–cysteine 383, cysteine 406–cysteine 423, and cysteine 447–cysteine 466.

The protein belongs to the glycosyl hydrolase 10 (cellulase F) family.

The protein resides in the secreted. It catalyses the reaction Endohydrolysis of (1-&gt;4)-beta-D-xylosidic linkages in xylans.. The protein operates within glycan degradation; xylan degradation. Its function is as follows. Contributes to hydrolyze hemicellulose, the major component of plant cell-walls. XLNA and XLNB seem to act sequentially on the substrate to yield xylobiose and xylose as carbon sources. This Streptomyces lividans protein is Endo-1,4-beta-xylanase A (xlnA).